The chain runs to 279 residues: Protein FAM151B (279 aa).

This sequence belongs to the menorin family.

Essential for survival of retinal photoreceptor cells. The chain is Protein FAM151B (Fam151b) from Mus musculus (Mouse).